The chain runs to 342 residues: MEPVCVKDFTLPELEEWVQGIGERSFRARQLFRHVYGRGVRSWSECSDLSRMFRVQLEHGVELDALSVLKKEQADDGTSKYLFGLRDGHSIEAVLIPDLPRSTLCVSSQVGCALGCKFCLTGSLGFKRNLSAAEIVDQVCQVQRDLGSRSRITNIVFMGMGEPLANLDSVLRAIRVIAEPNGMAFSHRRITLSTAGLVPQLRRLGRESPVNLAVSLHAAENELRAELMPVNRTYPLEVLMAACREYPLPPRKRITFEYILLDGINDDPKQAKQLVKLLHGIRAKVNLMPFNPHPGSVFRKPSEQRVLAFQEALQNARITTHVRRSRGGEIGAACGQLVAEYG.

The active-site Proton acceptor is glutamate 92. The 232-residue stretch at 98-329 (DLPRSTLCVS…THVRRSRGGE (232 aa)) folds into the Radical SAM core domain. Cysteines 105 and 334 form a disulfide. Residues cysteine 112, cysteine 116, and cysteine 119 each contribute to the [4Fe-4S] cluster site. S-adenosyl-L-methionine-binding positions include 161–162 (GE), serine 193, 215–217 (SLH), and asparagine 291. Cysteine 334 (S-methylcysteine intermediate) is an active-site residue.

This sequence belongs to the radical SAM superfamily. RlmN family. It depends on [4Fe-4S] cluster as a cofactor.

Its subcellular location is the cytoplasm. The catalysed reaction is adenosine(2503) in 23S rRNA + 2 reduced [2Fe-2S]-[ferredoxin] + 2 S-adenosyl-L-methionine = 2-methyladenosine(2503) in 23S rRNA + 5'-deoxyadenosine + L-methionine + 2 oxidized [2Fe-2S]-[ferredoxin] + S-adenosyl-L-homocysteine. It catalyses the reaction adenosine(37) in tRNA + 2 reduced [2Fe-2S]-[ferredoxin] + 2 S-adenosyl-L-methionine = 2-methyladenosine(37) in tRNA + 5'-deoxyadenosine + L-methionine + 2 oxidized [2Fe-2S]-[ferredoxin] + S-adenosyl-L-homocysteine. Functionally, specifically methylates position 2 of adenine 2503 in 23S rRNA and position 2 of adenine 37 in tRNAs. m2A2503 modification seems to play a crucial role in the proofreading step occurring at the peptidyl transferase center and thus would serve to optimize ribosomal fidelity. The sequence is that of Dual-specificity RNA methyltransferase RlmN from Syntrophobacter fumaroxidans (strain DSM 10017 / MPOB).